The following is a 315-amino-acid chain: Olfactory receptor 3A1 (315 aa).

At 1–28 (MQPESGANGTVIAEFILLGLLEAPGLQP) the chain is on the extracellular side. Residue Asn8 is glycosylated (N-linked (GlcNAc...) asparagine). A helical membrane pass occupies residues 29 to 52 (VVFVLFLFAYLVTVRGNLSILAAV). Topologically, residues 53–60 (LVEPKLHT) are cytoplasmic. The chain crosses the membrane as a helical span at residues 61–82 (PMYFFLGNLSVLDVGCISVTVP). The Extracellular segment spans residues 83 to 103 (SMLSRLLSRKRAVPCGACLTQ). Residues Cys100 and Cys192 are joined by a disulfide bond. The chain crosses the membrane as a helical span at residues 104–123 (LFFFHLFVGVDCFLLTAMAY). Residues 124–143 (DRFLAICRPLTYSTRMSQTV) lie on the Cytoplasmic side of the membrane. The helical transmembrane segment at 144–161 (QRMLVAASWACAFTNALT) threads the bilayer. The Extracellular segment spans residues 162–199 (HTVAMSTLNFCGPNVINHFYCDLPQLFQLSCSSTQLNE). The chain crosses the membrane as a helical span at residues 200-223 (LLLFAVGFIMAGTPMALIVISYIH). Residues 224–240 (VAAAVLRIRSVEGRKKA) are Cytoplasmic-facing. A helical transmembrane segment spans residues 241–264 (FSTCGSHLTVVAIFYGSGIFNYMR). Over 265-275 (LGSTKLSDKDK) the chain is Extracellular. A helical membrane pass occupies residues 276-295 (AVGIFNTVINPMLNPIIYSF). The Cytoplasmic segment spans residues 296 to 315 (RNPDVQSAIWRMLTGRRSLA).

Belongs to the G-protein coupled receptor 1 family.

It is found in the cell membrane. Odorant receptor. The sequence is that of Olfactory receptor 3A1 (OR3A1) from Homo sapiens (Human).